A 1536-amino-acid polypeptide reads, in one-letter code: Alpha-2-macroglobulin (1536 aa).

The N-terminal stretch at 1–23 is a signal peptide; sequence MGMKRLIFLVFLLISFSLFGGYA. A cross-link (isoglutamyl cysteine thioester (Cys-Gln)) is located at residues 919–922; it reads CVEQ.

This sequence belongs to the protease inhibitor I39 (alpha-2-macroglobulin) family. Bacterial alpha-2-macroglobulin subfamily.

Its function is as follows. Protects the bacterial cell from peptidases. This Thermotoga maritima (strain ATCC 43589 / DSM 3109 / JCM 10099 / NBRC 100826 / MSB8) protein is Alpha-2-macroglobulin.